Consider the following 289-residue polypeptide: Cyclo(L-tyrosyl-L-tyrosyl) synthase (289 aa).

Residues 1–48 (MSYVAAEPGVLISPTDDLQSPRSAPAAHDENADGITGGTRDDSAPNSR) form a disordered region. Catalysis depends on Ser-88, which acts as the Nucleophile. Substrate-binding positions include Asn-91, 229 to 233 (YICAE), and Tyr-253.

Belongs to the CDPS family. As to quaternary structure, homodimer.

The enzyme catalyses 2 L-tyrosyl-tRNA(Tyr) = cyclo(L-tyrosyl-L-tyrosyl) + 2 tRNA(Tyr). Functionally, involved in the biosynthesis of mycocyclosin. It uses activated amino acids in the form of aminoacyl-tRNAs (aa-tRNAs) as substrates to catalyze the ATP-independent formation of cyclodipeptides which are intermediates in diketopiperazine (DKP) biosynthetic pathways. Catalyzes the formation of cyclo(L-Tyr-L-Tyr) (cYY) from L-tyrosyl-tRNA(Tyr). This chain is Cyclo(L-tyrosyl-L-tyrosyl) synthase, found in Mycobacterium tuberculosis (strain CDC 1551 / Oshkosh).